The chain runs to 162 residues: Lipoprotein signal peptidase (162 aa).

2 helical membrane passes run 56–76 (FLPP…VVWY) and 84–104 (SPLF…NLID). Residues aspartate 113 and aspartate 139 contribute to the active site. Residues 132–152 (WPIFNVADSCITIGACMIVLF) traverse the membrane as a helical segment.

This sequence belongs to the peptidase A8 family.

It is found in the cell inner membrane. The catalysed reaction is Release of signal peptides from bacterial membrane prolipoproteins. Hydrolyzes -Xaa-Yaa-Zaa-|-(S,diacylglyceryl)Cys-, in which Xaa is hydrophobic (preferably Leu), and Yaa (Ala or Ser) and Zaa (Gly or Ala) have small, neutral side chains.. Its pathway is protein modification; lipoprotein biosynthesis (signal peptide cleavage). This protein specifically catalyzes the removal of signal peptides from prolipoproteins. This is Lipoprotein signal peptidase from Chlorobaculum tepidum (strain ATCC 49652 / DSM 12025 / NBRC 103806 / TLS) (Chlorobium tepidum).